The primary structure comprises 496 residues: Ribose import ATP-binding protein RbsA (496 aa).

2 consecutive ABC transporter domains span residues 5-242 (IEMK…VGRS) and 252-496 (SQIG…TGGE). Residue 37-44 (GENGAGKS) participates in ATP binding.

It belongs to the ABC transporter superfamily. Ribose importer (TC 3.A.1.2.1) family. The complex is composed of an ATP-binding protein (RbsA), two transmembrane proteins (RbsC) and a solute-binding protein (RbsB).

It localises to the cell membrane. The catalysed reaction is D-ribose(out) + ATP + H2O = D-ribose(in) + ADP + phosphate + H(+). Part of the ABC transporter complex RbsABC involved in ribose import. Responsible for energy coupling to the transport system. The protein is Ribose import ATP-binding protein RbsA of Bacillus cereus (strain ATCC 14579 / DSM 31 / CCUG 7414 / JCM 2152 / NBRC 15305 / NCIMB 9373 / NCTC 2599 / NRRL B-3711).